Consider the following 287-residue polypeptide: Formamidopyrimidine-DNA glycosylase (287 aa).

Residue P2 is the Schiff-base intermediate with DNA of the active site. The Proton donor role is filled by E3. K58 acts as the Proton donor; for beta-elimination activity in catalysis. Residues H104, R123, and R166 each contribute to the DNA site. The FPG-type zinc-finger motif lies at 251–287 (RVYDREGEPCPTPACKGVIAREVQAGRSTFFCPVCQV). R277 serves as the catalytic Proton donor; for delta-elimination activity.

It belongs to the FPG family. As to quaternary structure, monomer. Zn(2+) serves as cofactor.

It catalyses the reaction Hydrolysis of DNA containing ring-opened 7-methylguanine residues, releasing 2,6-diamino-4-hydroxy-5-(N-methyl)formamidopyrimidine.. It carries out the reaction 2'-deoxyribonucleotide-(2'-deoxyribose 5'-phosphate)-2'-deoxyribonucleotide-DNA = a 3'-end 2'-deoxyribonucleotide-(2,3-dehydro-2,3-deoxyribose 5'-phosphate)-DNA + a 5'-end 5'-phospho-2'-deoxyribonucleoside-DNA + H(+). In terms of biological role, involved in base excision repair of DNA damaged by oxidation or by mutagenic agents. Acts as a DNA glycosylase that recognizes and removes damaged bases. Has a preference for oxidized purines, such as 7,8-dihydro-8-oxoguanine (8-oxoG). Has AP (apurinic/apyrimidinic) lyase activity and introduces nicks in the DNA strand. Cleaves the DNA backbone by beta-delta elimination to generate a single-strand break at the site of the removed base with both 3'- and 5'-phosphates. This Caulobacter vibrioides (strain ATCC 19089 / CIP 103742 / CB 15) (Caulobacter crescentus) protein is Formamidopyrimidine-DNA glycosylase.